The following is a 502-amino-acid chain: Acetyl-coenzyme A carboxylase carboxyl transferase subunit beta, chloroplastic (502 aa).

A compositionally biased stretch (low complexity) spans 191 to 202 (GSDSESSSIRTS). A disordered region spans residues 191–212 (GSDSESSSIRTSGNDSNFNVRE). The 272-residue stretch at 226 to 497 (LWVQCENCYE…NQNSSGARGS (272 aa)) folds into the CoA carboxyltransferase N-terminal domain. Cys-230, Cys-233, Cys-249, and Cys-252 together coordinate Zn(2+). Residues 230-252 (CENCYELNYRSFFRSKMNICEQC) form a C4-type zinc finger.

The protein belongs to the AccD/PCCB family. Acetyl-CoA carboxylase is a heterohexamer composed of biotin carboxyl carrier protein, biotin carboxylase and 2 subunits each of ACCase subunit alpha and ACCase plastid-coded subunit beta (accD). It depends on Zn(2+) as a cofactor.

It localises to the plastid. Its subcellular location is the chloroplast stroma. It catalyses the reaction N(6)-carboxybiotinyl-L-lysyl-[protein] + acetyl-CoA = N(6)-biotinyl-L-lysyl-[protein] + malonyl-CoA. Its pathway is lipid metabolism; malonyl-CoA biosynthesis; malonyl-CoA from acetyl-CoA: step 1/1. Its function is as follows. Component of the acetyl coenzyme A carboxylase (ACC) complex. Biotin carboxylase (BC) catalyzes the carboxylation of biotin on its carrier protein (BCCP) and then the CO(2) group is transferred by the transcarboxylase to acetyl-CoA to form malonyl-CoA. This is Acetyl-coenzyme A carboxylase carboxyl transferase subunit beta, chloroplastic from Chloranthus spicatus (Chulantree).